The following is a 384-amino-acid chain: Succinyl-diaminopimelate desuccinylase (384 aa).

His-71 provides a ligand contact to Zn(2+). Asp-73 is a catalytic residue. Asp-104 contributes to the Zn(2+) binding site. The Proton acceptor role is filled by Glu-139. The Zn(2+) site is built by Glu-140, Glu-168, and His-357.

This sequence belongs to the peptidase M20A family. DapE subfamily. As to quaternary structure, homodimer. Requires Zn(2+) as cofactor. The cofactor is Co(2+).

It catalyses the reaction N-succinyl-(2S,6S)-2,6-diaminopimelate + H2O = (2S,6S)-2,6-diaminopimelate + succinate. It functions in the pathway amino-acid biosynthesis; L-lysine biosynthesis via DAP pathway; LL-2,6-diaminopimelate from (S)-tetrahydrodipicolinate (succinylase route): step 3/3. Functionally, catalyzes the hydrolysis of N-succinyl-L,L-diaminopimelic acid (SDAP), forming succinate and LL-2,6-diaminopimelate (DAP), an intermediate involved in the bacterial biosynthesis of lysine and meso-diaminopimelic acid, an essential component of bacterial cell walls. This chain is Succinyl-diaminopimelate desuccinylase, found in Bradyrhizobium sp. (strain BTAi1 / ATCC BAA-1182).